Reading from the N-terminus, the 230-residue chain is MEIKVLEKGFIRLVEVMGDDFSAVQAARVSYGKGLTTPERDKKLIFYLMEHGHHSPFEHIIFKFHIKLPIFVMRQLVRHRIASINERSGRYTEFSDEWYIPERIRTPDKVNRQGSVFVDDDDLNSEGIRLIEETIEKTYQAYKRLLEMGVARELARIVLPTSMYTECYWTINARSMMNFLNLRADSHAQYEMQQYALAVAKIFKSKCPVTYEAFLNFAYTGDLLKTEGCL.

One can recognise a ThyX domain in the interval 1-217 (MEIKVLEKGF…PVTYEAFLNF (217 aa)). Residues S55, 78–80 (RHR), and E86 contribute to the FAD site. Residues 75–78 (QLVR), 86–90 (ERSGR), and R156 each bind dUMP. The ThyX motif motif lies at 78 to 88 (RHRIASINERS). FAD-binding positions include 172 to 174 (NAR) and N178. A dUMP-binding site is contributed by R183. R183 (involved in ionization of N3 of dUMP, leading to its activation) is an active-site residue.

This sequence belongs to the thymidylate synthase ThyX family. Homotetramer. It depends on FAD as a cofactor.

The enzyme catalyses dUMP + (6R)-5,10-methylene-5,6,7,8-tetrahydrofolate + NADPH + H(+) = dTMP + (6S)-5,6,7,8-tetrahydrofolate + NADP(+). It participates in pyrimidine metabolism; dTTP biosynthesis. Catalyzes the reductive methylation of 2'-deoxyuridine-5'-monophosphate (dUMP) to 2'-deoxythymidine-5'-monophosphate (dTMP) while utilizing 5,10-methylenetetrahydrofolate (mTHF) as the methyl donor, and NADPH and FADH(2) as the reductant. This chain is Flavin-dependent thymidylate synthase, found in Kosmotoga olearia (strain ATCC BAA-1733 / DSM 21960 / TBF 19.5.1).